The following is a 2236-amino-acid chain: uncharacterized protein (2236 aa).

Spectrin repeat units lie at residues 46–146 (QVYL…RQLE) and 238–335 (QKFV…TDIE). 2 coiled-coil regions span residues 496 to 541 (VVEQ…TVNS) and 603 to 631 (DDQQ…VGRQ). Spectrin repeat units follow at residues 839–949 (YEYD…KTLK), 1048–1146 (KKLE…KRME), 1261–1361 (LGAE…VDLN), 1367–1459 (ILID…KSLA), and 1562–1667 (QKVV…NRLE). The stretch at 1835 to 1869 (QNSTDAEKKLSLVSERLNALKKQLDLLAEKIAVDD) forms a coiled coil. 2 EF-hand domains span residues 2104–2139 (KQLH…QGYN) and 2141–2176 (SAEN…HETT). Ca(2+) is bound by residues aspartate 2154, serine 2156, threonine 2158, histidine 2160, and aspartate 2165.

This sequence belongs to the spectrin family.

This is an uncharacterized protein from Caenorhabditis elegans.